The sequence spans 334 residues: Glycerol-3-phosphate dehydrogenase [NAD(P)+] (334 aa).

Residues Ser-14, Tyr-15, Arg-35, and Lys-109 each coordinate NADPH. Residues Lys-109, Gly-138, and Thr-140 each coordinate sn-glycerol 3-phosphate. NADPH is bound at residue Ala-142. Sn-glycerol 3-phosphate is bound by residues Lys-194, Asp-247, Ser-257, Arg-258, and Asn-259. Lys-194 serves as the catalytic Proton acceptor. Arg-258 lines the NADPH pocket. NADPH contacts are provided by Val-282 and Glu-284.

Belongs to the NAD-dependent glycerol-3-phosphate dehydrogenase family.

Its subcellular location is the cytoplasm. The enzyme catalyses sn-glycerol 3-phosphate + NAD(+) = dihydroxyacetone phosphate + NADH + H(+). The catalysed reaction is sn-glycerol 3-phosphate + NADP(+) = dihydroxyacetone phosphate + NADPH + H(+). Its pathway is membrane lipid metabolism; glycerophospholipid metabolism. In terms of biological role, catalyzes the reduction of the glycolytic intermediate dihydroxyacetone phosphate (DHAP) to sn-glycerol 3-phosphate (G3P), the key precursor for phospholipid synthesis. This chain is Glycerol-3-phosphate dehydrogenase [NAD(P)+], found in Colwellia psychrerythraea (strain 34H / ATCC BAA-681) (Vibrio psychroerythus).